Consider the following 512-residue polypeptide: Histidine ammonia-lyase (512 aa).

A cross-link (5-imidazolinone (Ala-Gly)) is located at residues 142–144; that stretch reads ASG. Serine 143 carries the 2,3-didehydroalanine (Ser) modification.

Belongs to the PAL/histidase family. Contains an active site 4-methylidene-imidazol-5-one (MIO), which is formed autocatalytically by cyclization and dehydration of residues Ala-Ser-Gly.

It is found in the cytoplasm. It catalyses the reaction L-histidine = trans-urocanate + NH4(+). It participates in amino-acid degradation; L-histidine degradation into L-glutamate; N-formimidoyl-L-glutamate from L-histidine: step 1/3. The chain is Histidine ammonia-lyase from Allorhizobium ampelinum (strain ATCC BAA-846 / DSM 112012 / S4) (Agrobacterium vitis (strain S4)).